The sequence spans 109 residues: MRVFFSLIIFSFMLATCQGACGIGPLVSSPTDAMAPKKCVDPNDRRKHLIVSTWNTADCLRCECDNDGLSCCHRYGGLAERAGCKSVLNQVTCEYEFYRLDDLSKRCDA.

Positions 1–19 (MRVFFSLIIFSFMLATCQG) are cleaved as a signal peptide. Intrachain disulfides connect Cys21–Cys72, Cys39–Cys64, Cys59–Cys93, Cys62–Cys71, and Cys84–Cys107.

Forms a stable, non-covalent complex with serotriflin.

The protein localises to the secreted. May serve as a self-defense protein against the toxic effects of the snake venom during accidental envenomation. Does not show inhibitory activity towards brevilysin H6. This Protobothrops flavoviridis (Habu) protein is Small serum protein 2.